The primary structure comprises 230 residues: Methyltransferase aurB (230 aa).

Belongs to the methyltransferase superfamily.

The protein operates within polyketide biosynthesis. Its function is as follows. Methyltransferase; part of the gene cluster that mediates the biosynthesis of aurovertins, fungal polyketides that exhibit potent inhibition of adenosine triphosphate synthase. Tha biosynthesis starts with the HR-PKS aurA that selects propionate as the starter unit; synthesizes a hexa-ene chain through the repeated functions of the KR and DH domains in the first six iterations; selectively introduces three alpha-methyl substitutions at C4, C6, and C16 using the S-adensylmethionine-dependent cMET; and shuts off KR and DH in the last three iterations to afford a 1,3,5-triketo portion that can undergo intramolecular cyclization to yield the alpha-pyrone intermediate. AurE may act as a cyclase and enhances the rate of pyrone formation and product release of aurA. The methyltransferase aurB then methylates the C17 hydroxyl group. C17 methylation is required to initiate epoxidation by the downstream monooxygenase aurC. The monooxygenase aurC and the epoxide hydrolase aurD can iteratively transform the terminal triene portion of the methylated precursor into the dioxabicyclo[3.2.1]octane scaffold of aurovertin E. Epoxidation modifications of the precursor occur in two separate steps; bis-epoxidation of the two terminal olefins takes place first, followed by another epoxidation that occurs at C7-C8 after tetrahydrofuran formation. The O-acyltransferase aurG converts aurovertin E to aurovertin A. This is Methyltransferase aurB from Calcarisporium arbuscula (Dendryphion arbuscula).